A 930-amino-acid chain; its full sequence is Translation initiation factor IF-2 (930 aa).

Positions 50-67 (FKPAAAPKVEAKPAAPKV) are enriched in low complexity. 2 disordered regions span residues 50–217 (FKPA…SSEE) and 260–346 (EVVP…HELP). Composition is skewed to basic and acidic residues over residues 68 to 90 (SAEKKAEKSEPAKPAVAKEEAKP) and 110 to 125 (FKAEREARAKEQAERR). The span at 129-141 (KGNNRDQQQNGNR) shows a compositional bias: low complexity. Basic and acidic residues-rich tracts occupy residues 157–167 (RDNRRFNDQAK) and 262–295 (VPEKKEPAVDTRRKKQARPDKNRDDYDHEEDGPR). Over residues 309-318 (NQKNSNWNNN) the composition is skewed to low complexity. Positions 337-346 (VTERKFHELP) are enriched in basic and acidic residues. The tr-type G domain maps to 432-599 (ERPPVVTIMG…TVLLVAEIQE (168 aa)). The G1 stretch occupies residues 441 to 448 (GHVDHGKT). 441 to 448 (GHVDHGKT) is a binding site for GTP. Positions 466 to 470 (GITQH) are G2. The G3 stretch occupies residues 487–490 (DTPG). GTP is bound by residues 487 to 491 (DTPGH) and 541 to 544 (NKID). The tract at residues 541–544 (NKID) is G4. Positions 577–579 (SAK) are G5.

Belongs to the TRAFAC class translation factor GTPase superfamily. Classic translation factor GTPase family. IF-2 subfamily.

It localises to the cytoplasm. Functionally, one of the essential components for the initiation of protein synthesis. Protects formylmethionyl-tRNA from spontaneous hydrolysis and promotes its binding to the 30S ribosomal subunits. Also involved in the hydrolysis of GTP during the formation of the 70S ribosomal complex. This Streptococcus pneumoniae (strain P1031) protein is Translation initiation factor IF-2.